Here is a 206-residue protein sequence, read N- to C-terminus: Large ribosomal subunit protein bL9 (206 aa).

Residues 182-206 form a disordered region; the sequence is FAENQQKALAKEMNDNDANSINEEA. Over residues 197-206 the composition is skewed to polar residues; sequence NDANSINEEA.

The protein belongs to the bacterial ribosomal protein bL9 family.

Its function is as follows. Binds to the 23S rRNA. This chain is Large ribosomal subunit protein bL9, found in Bartonella henselae (strain ATCC 49882 / DSM 28221 / CCUG 30454 / Houston 1) (Rochalimaea henselae).